Consider the following 839-residue polypeptide: MKKRASVDSKESEDPPQEDYSLDPLDVDANSKTPPAKPHTFSVSKSRNRLFGKSDLEESSPIDCSFREGEAASCPTITVSSVVTSPRPADGPTSTRQLTQDSIPTSAEKPLKLYDRRSIFDAVAQNNCQDLDSLLPFLQKSKKRLTDTEFKDPETGKTCLLKAMLNLHNGQNDTISLLLDIARQTNSLKEFVNASYTDSYYRGQTALHIAIERRNMVLVTLLVENGADVQAAANGDFFKKTKGRPGFYFGELPLSLAACTNQLAIVKFLLQNSWQPADISARDSVGNTVLHALVEVADNTADNTKFVTSMYNEILILGAKLYPTLKLEELTNKKGFTPLALAASSGKIGVLAYILQREIPEPECRHLSRKFTEWAYGPVHSSLYDLSCIDTCEKNSVLEVIAYSSSETPNRHDMLLVEPLNRLLQDKWDRFVKRIFYFNFFIYCLYMIIFTMAAYYRPVDGLPPYKMKNTVGDYFRVTGEILSVIGGFHFFFRGIQYFLQRRPSVKTLFVDSYSEILFFVQSLFLLASVVLYFSHRKEYVACMVFSLALGWTNMLYYTRGFQQMGIYAVMIEKMILRDLCRFMFVYLVFLFGFSTAVVTLIEDGKNESLSAEPHRWRGPGCRSAKNSYNSLYSTCLELFKFTIGMGDLEFTENYDFKAVFIILLLAYVILTYILLLNMLIALMGETVNKIAQESKNIWKLQRAITILDTEKSFLKCMRKAFRSGKLLQVGYTPDGKDDYRWCFRVDEVNWTTWNTNVGIINEDPGNCEGVKRTLSFSLRSGRVSGRNWKNFALVPLLRDASTRDRHSAQPEEVHLKHFSGSLKPEDAEVFKDSAVPGEK.

Basic and acidic residues predominate over residues 1 to 13; the sequence is MKKRASVDSKESE. 2 disordered regions span residues 1 to 59 and 82 to 107; these read MKKR…LEES and VVTS…PTSA. Over 1–433 the chain is Cytoplasmic; that stretch reads MKKRASVDSK…LQDKWDRFVK (433 aa). A compositionally biased stretch (polar residues) spans 92-105; the sequence is PTSTRQLTQDSIPT. One copy of the ANK 1 repeat lies at 111 to 139; that stretch reads LKLYDRRSIFDAVAQNNCQDLDSLLPFLQ. ATP is bound at residue Arg117. Ser118 carries the post-translational modification Phosphoserine; by PKA and PKD. At Thr146 the chain carries Phosphothreonine; by PKA; in vitro. 5 ANK repeats span residues 154-187, 204-229, 250-277, 286-322, and 336-359; these read ETGK…QTNS, QTAL…GADV, GELP…WQPA, GNTV…AKLY, and FTPL…QREI. Residues Lys157, Lys162, Asn166, 201-204, and 212-213 contribute to the ATP site; these read YRGQ and ER. A Phosphothreonine; by PKA; in vitro modification is found at Thr372. An ANK 7 repeat occupies 394-416; sequence KNSVLEVIAYSSSETPNRHDMLL. The helical transmembrane segment at 434 to 455 threads the bilayer; that stretch reads RIFYFNFFIYCLYMIIFTMAAY. Topologically, residues 456–472 are extracellular; sequence YRPVDGLPPYKMKNTVG. Residues 473-497 form a helical membrane-spanning segment; the sequence is DYFRVTGEILSVIGGFHFFFRGIQY. Over 498–510 the chain is Cytoplasmic; that stretch reads FLQRRPSVKTLFV. Ser504 carries the phosphoserine; by PKC/PRKCE modification. Residues 511 to 532 traverse the membrane as a helical segment; that stretch reads DSYSEILFFVQSLFLLASVVLY. 513–514 contributes to the resiniferatoxin binding site; it reads YS. Over 533 to 535 the chain is Extracellular; the sequence is FSH. The helical transmembrane segment at 536–556 threads the bilayer; the sequence is RKEYVACMVFSLALGWTNMLY. Resiniferatoxin is bound by residues Thr552 and Arg559. Topologically, residues 557 to 559 are cytoplasmic; the sequence is YTR. The chain crosses the membrane as a helical span at residues 560–598; it reads GFQQMGIYAVMIEKMILRDLCRFMFVYLVFLFGFSTAVV. The Extracellular portion of the chain corresponds to 599-630; the sequence is TLIEDGKNESLSAEPHRWRGPGCRSAKNSYNS. Asn606 is a glycosylation site (N-linked (GlcNAc...) asparagine). The pore-forming intramembrane region spans 631-652; sequence LYSTCLELFKFTIGMGDLEFTE. Gly644 lines the Na(+) pocket. The short motif at 644–647 is the Selectivity filter element; the sequence is GMGD. Asp647 serves as a coordination point for Ca(2+). The Extracellular portion of the chain corresponds to 653 to 656; that stretch reads NYDF. A helical membrane pass occupies residues 657-683; that stretch reads KAVFIILLLAYVILTYILLLNMLIALM. Residues 684-839 lie on the Cytoplasmic side of the membrane; it reads GETVNKIAQE…FKDSAVPGEK (156 aa). Residues 685–713 are AD; sequence ETVNKIAQESKNIWKLQRAITILDTEKSF. Phosphothreonine is present on Thr705. The tract at residues 768 to 802 is interaction with calmodulin; the sequence is EGVKRTLSFSLRSGRVSGRNWKNFALVPLLRDAST. Ser775 is modified (phosphoserine). The segment at 778–793 is required for PIP2-mediated channel inhibition; sequence LRSGRVSGRNWKNFAL. A Phosphoserine; by PKC/PRKCE and PKC/PRKCZ modification is found at Ser801. Ser821 bears the Phosphoserine mark.

Belongs to the transient receptor (TC 1.A.4) family. TrpV subfamily. TRPV1 sub-subfamily. Homotetramer. Interacts with PIRT. May also form a heteromeric channel with TRPV3. Interacts with CALM, PRKCM and CSK. Interacts with PRKCG and NTRK1, probably by forming a trimeric complex. Interacts with the Scolopendra mutilans RhTx toxin. Interacts with TMEM100. Interacts with PACS2. Post-translationally, phosphorylation by PKA reverses capsaicin-induced dephosphorylation at multiple sites, probably including Ser-118 as a major phosphorylation site. Phosphorylation by CAMKII seems to regulate binding to vanilloids. Phosphorylated and modulated by PRKCE, PRKCM and probably PRKCZ. Dephosphorylation by calcineurin seems to lead to receptor desensitization and phosphorylation by CAMKII recovers activity.

The protein resides in the postsynaptic cell membrane. Its subcellular location is the cell projection. It localises to the dendritic spine membrane. The protein localises to the cell membrane. It carries out the reaction Ca(2+)(in) = Ca(2+)(out). It catalyses the reaction Mg(2+)(in) = Mg(2+)(out). The enzyme catalyses Na(+)(in) = Na(+)(out). The catalysed reaction is K(+)(in) = K(+)(out). Channel activity is activated via the interaction with PIRT and phosphatidylinositol 4,5-bisphosphate (PIP2). Both PIRT and PIP2 are required to activate channel activity. The channel is sensitized by ATP binding. Repeated stimulation with capsaicin gives rise to progressively smaller responses, due to desensitization. This desensitization is triggered by the influx of calcium ions and is inhibited by elevated ATP levels. Ca(2+) and CALM displace ATP from its binding site and trigger a conformation change that leads to a closed, desensitized channel. Intracellular PIP2 inhibits desensitization. The double-knot toxin (DkTx) from the Chinese earth tiger tarantula activates the channel and traps it in an open conformation. The Scolopendra mutilans RhTx toxin potentiates the heat activation pathway mediated by this channel by binding to the charge-rich outer pore region (in an activated state). In terms of biological role, non-selective calcium permeant cation channel involved in detection of noxious chemical and thermal stimuli. Seems to mediate proton influx and may be involved in intracellular acidosis in nociceptive neurons. Involved in mediation of inflammatory pain and hyperalgesia. Sensitized by a phosphatidylinositol second messenger system activated by receptor tyrosine kinases, which involves PKC isozymes and PCL. Activation by vanilloids, like capsaicin, and temperatures higher than 42 degrees Celsius. Upon activation, exhibits a time- and Ca(2+)-dependent outward rectification, followed by a long-lasting refractory state. Mild extracellular acidic pH (6.5) potentiates channel activation by noxious heat and vanilloids, whereas acidic conditions (pH &lt;6) directly activate the channel. Can be activated by endogenous compounds, including 12-hydroperoxytetraenoic acid and bradykinin. Acts as ionotropic endocannabinoid receptor with central neuromodulatory effects. Triggers a form of long-term depression (TRPV1-LTD) mediated by the endocannabinoid anandamine in the hippocampus and nucleus accumbens by affecting AMPA receptors endocytosis. This Cavia porcellus (Guinea pig) protein is Transient receptor potential cation channel subfamily V member 1 (Trpv1).